We begin with the raw amino-acid sequence, 244 residues long: MNIDLNADLGEGCASDSELLTLVSSANIACGFHAGDAQTMLTCVREALKNGVAIGAHPSFPDRDNLGRTAMVLPPETVYAQTLYQIGALGAIVQAQGGVMRHVKPHGMLYNQAAKDPRLAQAIAKAVHDYDPSLILVGLAGSELIRAGERHRLVTRQEVFADRGYQADGSLVPRTQPGALIHDEEQALAQTLDMVQAGRVKSVTGVWTTVTAQTVCIHGDGEYALAFARRLRAAFNARNIHVIA.

Belongs to the LamB/PxpA family. In terms of assembly, forms a complex composed of PxpA, PxpB and PxpC.

The catalysed reaction is 5-oxo-L-proline + ATP + 2 H2O = L-glutamate + ADP + phosphate + H(+). In terms of biological role, catalyzes the cleavage of 5-oxoproline to form L-glutamate coupled to the hydrolysis of ATP to ADP and inorganic phosphate. This is 5-oxoprolinase subunit A from Salmonella heidelberg (strain SL476).